Consider the following 254-residue polypeptide: Cobalt transport protein CbiM (254 aa).

The signal sequence occupies residues Met-1 to Ala-31. A run of 6 helical transmembrane segments spans residues Gly-37–Val-57, Leu-74–Val-94, Leu-106–Phe-126, Ala-128–Ile-148, Trp-169–Leu-189, and Ile-212–Phe-232.

The protein belongs to the CbiM family. In terms of assembly, forms an energy-coupling factor (ECF) transporter complex composed of an ATP-binding protein (A component, CbiO), a transmembrane protein (T component, CbiQ) and 2 possible substrate-capture proteins (S components, CbiM and CbiN) of unknown stoichimetry.

The protein resides in the cell inner membrane. It participates in cofactor biosynthesis; adenosylcobalamin biosynthesis. Functionally, part of the energy-coupling factor (ECF) transporter complex CbiMNOQ involved in cobalt import. This is Cobalt transport protein CbiM from Chlorobium limicola (strain DSM 245 / NBRC 103803 / 6330).